The sequence spans 218 residues: Pyridoxine/pyridoxamine 5'-phosphate oxidase (218 aa).

Substrate is bound by residues 14–17 and K72; that span reads RREY. FMN contacts are provided by residues 67 to 72, 82 to 83, R88, K89, and Q111; these read RIVLLK and YT. Substrate contacts are provided by Y129, R133, and S137. Residues 146–147 and W191 contribute to the FMN site; that span reads QS. 197–199 contacts substrate; that stretch reads RLH. Position 201 (R201) interacts with FMN.

The protein belongs to the pyridoxamine 5'-phosphate oxidase family. In terms of assembly, homodimer. Requires FMN as cofactor.

It carries out the reaction pyridoxamine 5'-phosphate + O2 + H2O = pyridoxal 5'-phosphate + H2O2 + NH4(+). It catalyses the reaction pyridoxine 5'-phosphate + O2 = pyridoxal 5'-phosphate + H2O2. It functions in the pathway cofactor metabolism; pyridoxal 5'-phosphate salvage; pyridoxal 5'-phosphate from pyridoxamine 5'-phosphate: step 1/1. It participates in cofactor metabolism; pyridoxal 5'-phosphate salvage; pyridoxal 5'-phosphate from pyridoxine 5'-phosphate: step 1/1. Its function is as follows. Catalyzes the oxidation of either pyridoxine 5'-phosphate (PNP) or pyridoxamine 5'-phosphate (PMP) into pyridoxal 5'-phosphate (PLP). The protein is Pyridoxine/pyridoxamine 5'-phosphate oxidase of Escherichia fergusonii (strain ATCC 35469 / DSM 13698 / CCUG 18766 / IAM 14443 / JCM 21226 / LMG 7866 / NBRC 102419 / NCTC 12128 / CDC 0568-73).